The following is a 333-amino-acid chain: Ketol-acid reductoisomerase (NADP(+)) (333 aa).

The 181-residue stretch at 2–182 folds into the KARI N-terminal Rossmann domain; that stretch reads ANIYYDADCD…GGGRAGILET (181 aa). NADP(+)-binding positions include 25 to 28, K48, S51, S53, and 83 to 86; these read YGSQ and DTIQ. H108 is a catalytic residue. Residue G134 coordinates NADP(+). The KARI C-terminal knotted domain maps to 183-331; that stretch reads SFREETETDL…KKLRSMMKWL (149 aa). D191, E195, E227, and E231 together coordinate Mg(2+). Substrate is bound at residue S252.

The protein belongs to the ketol-acid reductoisomerase family. The cofactor is Mg(2+).

It carries out the reaction (2R)-2,3-dihydroxy-3-methylbutanoate + NADP(+) = (2S)-2-acetolactate + NADPH + H(+). The enzyme catalyses (2R,3R)-2,3-dihydroxy-3-methylpentanoate + NADP(+) = (S)-2-ethyl-2-hydroxy-3-oxobutanoate + NADPH + H(+). Its pathway is amino-acid biosynthesis; L-isoleucine biosynthesis; L-isoleucine from 2-oxobutanoate: step 2/4. It participates in amino-acid biosynthesis; L-valine biosynthesis; L-valine from pyruvate: step 2/4. In terms of biological role, involved in the biosynthesis of branched-chain amino acids (BCAA). Catalyzes an alkyl-migration followed by a ketol-acid reduction of (S)-2-acetolactate (S2AL) to yield (R)-2,3-dihydroxy-isovalerate. In the isomerase reaction, S2AL is rearranged via a Mg-dependent methyl migration to produce 3-hydroxy-3-methyl-2-ketobutyrate (HMKB). In the reductase reaction, this 2-ketoacid undergoes a metal-dependent reduction by NADPH to yield (R)-2,3-dihydroxy-isovalerate. The polypeptide is Ketol-acid reductoisomerase (NADP(+)) (Leptospira borgpetersenii serovar Hardjo-bovis (strain JB197)).